A 215-amino-acid chain; its full sequence is Large ribosomal subunit protein eL14 (215 aa).

Lys-79 carries the N6-acetyllysine modification. Lys-85 is modified (N6-acetyllysine; alternate). N6-succinyllysine; alternate is present on Lys-85. A Glycyl lysine isopeptide (Lys-Gly) (interchain with G-Cter in SUMO2) cross-link involves residue Lys-124. Ser-139 is modified (phosphoserine). Residues 161–215 are disordered; it reads VPAKKITAASKKAPAQKVPAQKATGQKAAPAPKAQKGQKAPAQKAPAPKASGKKA. Repeat copies occupy residues 171–175, 176–180, 181–185, 186–190, 193–195, and 196–198. The tract at residues 171–190 is 4 X 5 AA tandem repeats of Q-K-A-[PAS]-X; sequence KKAPAQKVPAQKATGQKAAP. Positions 193–198 are 2 X 3 AA tandem repeats of K-[GA]-Q; that stretch reads KAQKGQ. The residue at position 204 (Lys-204) is an N6-succinyllysine.

Belongs to the eukaryotic ribosomal protein eL14 family. In terms of assembly, component of the large ribosomal subunit.

The protein resides in the cytoplasm. Its function is as follows. Component of the large ribosomal subunit. The ribosome is a large ribonucleoprotein complex responsible for the synthesis of proteins in the cell. This Homo sapiens (Human) protein is Large ribosomal subunit protein eL14 (RPL14).